The chain runs to 96 residues: Small ribosomal subunit protein bS6 (96 aa).

Belongs to the bacterial ribosomal protein bS6 family.

Functionally, binds together with bS18 to 16S ribosomal RNA. This chain is Small ribosomal subunit protein bS6, found in Streptococcus pyogenes serotype M1.